A 968-amino-acid polypeptide reads, in one-letter code: Alanine--tRNA ligase, cytoplasmic (968 aa).

Methionine 1 carries the N-acetylmethionine modification. 2 positions are modified to phosphoserine: serine 3 and serine 8. Lysine 19 carries the post-translational modification N6-acetyllysine. Residues arginine 77, histidine 95, tryptophan 176, and 214–216 each bind ATP; that span reads IWN. 2 residues coordinate L-alanine: asparagine 216 and aspartate 239. Glycine 243 serves as a coordination point for ATP. Residues serine 399 and serine 555 each carry the phosphoserine modification. Zn(2+) is bound by residues histidine 605, histidine 609, cysteine 723, and histidine 727. Positions 750 to 763 match the Nuclear localization signal motif; sequence RRIVAVTGAEAQKA. Lysine 876 is subject to N6-acetyllysine. At lysine 943 the chain carries N6,N6,N6-trimethyllysine; alternate. At lysine 943 the chain carries N6,N6-dimethyllysine; alternate. Lysine 943 is subject to N6-methyllysine; alternate.

This sequence belongs to the class-II aminoacyl-tRNA synthetase family. In terms of assembly, monomer. Interacts with ANKRD16; the interaction is direct. Zn(2+) is required as a cofactor. In terms of processing, ISGylated. Post-translationally, methylation at 'Lys-943' by METTL21C.

The protein resides in the cytoplasm. It localises to the nucleus. It catalyses the reaction tRNA(Ala) + L-alanine + ATP = L-alanyl-tRNA(Ala) + AMP + diphosphate. The enzyme catalyses (S)-lactate + ATP + H(+) = (S)-lactoyl-AMP + diphosphate. The catalysed reaction is (S)-lactoyl-AMP + L-lysyl-[protein] = N(6)-[(S)-lactoyl]-L-lysyl-[protein] + AMP + 2 H(+). With respect to regulation, the protein lactyltransferase activity is inhibited by beta-alanine. Functionally, catalyzes the attachment of alanine to tRNA(Ala) in a two-step reaction: alanine is first activated by ATP to form Ala-AMP and then transferred to the acceptor end of tRNA(Ala). Also edits incorrectly charged tRNA(Ala) via its editing domain. In presence of high levels of lactate, also acts as a protein lactyltransferase that mediates lactylation of lysine residues in target proteins, such as TEAD1, TP53/p53 and YAP1. Protein lactylation takes place in a two-step reaction: lactate is first activated by ATP to form lactate-AMP and then transferred to lysine residues of target proteins. Acts as an inhibitor of TP53/p53 activity by catalyzing lactylation of TP53/p53. Acts as a positive regulator of the Hippo pathway by mediating lactylation of TEAD1 and YAP1. This chain is Alanine--tRNA ligase, cytoplasmic, found in Homo sapiens (Human).